Here is a 346-residue protein sequence, read N- to C-terminus: Phosphate acyltransferase (346 aa).

It belongs to the PlsX family. As to quaternary structure, homodimer. Probably interacts with PlsY.

It localises to the cytoplasm. It carries out the reaction a fatty acyl-[ACP] + phosphate = an acyl phosphate + holo-[ACP]. It participates in lipid metabolism; phospholipid metabolism. Catalyzes the reversible formation of acyl-phosphate (acyl-PO(4)) from acyl-[acyl-carrier-protein] (acyl-ACP). This enzyme utilizes acyl-ACP as fatty acyl donor, but not acyl-CoA. This is Phosphate acyltransferase from Psychromonas ingrahamii (strain DSM 17664 / CCUG 51855 / 37).